Reading from the N-terminus, the 207-residue chain is ADP-ribose pyrophosphatase (207 aa).

Residues 37-38 (RE) and R64 each bind substrate. The Nudix hydrolase domain maps to 41–172 (EHFGAVAIVA…EIVNSIAIAG (132 aa)). A Mg(2+)-binding site is contributed by A76. The Nudix box motif lies at 77–99 (GLLDVAGEPPHLTAARELREEVG). L78 provides a ligand contact to substrate. Mg(2+)-binding residues include E93 and E97. Residues 114–116 (APG) and E120 each bind substrate. E142 serves as a coordination point for Mg(2+). E142 functions as the Proton acceptor in the catalytic mechanism.

Belongs to the Nudix hydrolase family. As to quaternary structure, homodimer. Requires Mg(2+) as cofactor. Mn(2+) is required as a cofactor.

The enzyme catalyses ADP-D-ribose + H2O = D-ribose 5-phosphate + AMP + 2 H(+). The catalysed reaction is 8-oxo-dGDP + H2O = 8-oxo-dGMP + phosphate + H(+). It catalyses the reaction 8-oxo-GDP + H2O = 8-oxo-GMP + phosphate + H(+). Catalyzes the hydrolysis of ADP-ribose (ADPR) to AMP and ribose-5-phosphate. Can also hydrolyze ADP-mannose and ADP-glucose, with lower efficiency. Has weaker activity with NAD, GDP-sugars and UDP-sugars. Also catalyzes the conversion of 8-oxo-dGDP to 8-oxo-dGMP, and 8-oxo-GDP to 8-oxo-GMP. Functions in concert with MutT1 to detoxify 8-oxo-dGTP to 8-oxo-dGMP and may play an important role in supporting cellular growth under oxidative stress. The catalytic efficiency is much higher for the hydrolysis of ADPR than 8-oxo-dGTP, suggesting a more relevant biological role in hydrolysis of ADPR. This is ADP-ribose pyrophosphatase from Mycobacterium tuberculosis (strain ATCC 25618 / H37Rv).